Reading from the N-terminus, the 224-residue chain is Artemin (224 aa).

Residues 1 to 39 (MELGLAEPTALSHCLRPRWQSAWWPTLAVLALLSCVTEA) form the signal peptide. Positions 40–111 (SLDPMSRSPA…AALRGARAAR (72 aa)) are excised as a propeptide. The interval 43-124 (PMSRSPAARD…RSSRARTTDA (82 aa)) is disordered. Residues 80–95 (RPPPQSPQPAPPPPGP) show a composition bias toward pro residues. The span at 96–116 (ALQSPPAALRGARAARAGTRS) shows a compositional bias: low complexity. Disulfide bonds link cysteine 127–cysteine 192, cysteine 154–cysteine 220, and cysteine 158–cysteine 222. Asparagine 206 is a glycosylation site (N-linked (GlcNAc...) asparagine).

It belongs to the TGF-beta family. GDNF subfamily. As to quaternary structure, homodimer; disulfide-linked. Interacts with GFRA3 coreceptor and RET: forms a 2:2:2 ternary complex composed of ARTN ligand, GFRA3 and RET receptor.

The protein resides in the secreted. Functionally, growth factor that supports the survival of sensory and sympathetic peripheral neurons in culture and also supports the survival of dopaminergic neurons of the ventral mid-brain. Acts by binding to its coreceptor, GFRA3, leading to autophosphorylation and activation of the RET receptor. Strong attractant of gut hematopoietic cells thus promoting the formation Peyer's patch-like structures, a major component of the gut-associated lymphoid tissue. The polypeptide is Artemin (Mus musculus (Mouse)).